The chain runs to 258 residues: Tritrans,polycis-undecaprenyl-diphosphate synthase (geranylgeranyl-diphosphate specific) (258 aa).

The active site involves Asp-37. Residue Asp-37 coordinates Mg(2+). Substrate contacts are provided by residues 38–41 (GNRR), His-54, and 82–84 (STE). Asn-85 functions as the Proton acceptor in the catalytic mechanism. Substrate is bound by residues Phe-86, Arg-88, Arg-207, and 213-215 (RIS). Glu-226 contributes to the Mg(2+) binding site.

This sequence belongs to the UPP synthase family. Homodimer. Mg(2+) is required as a cofactor.

It carries out the reaction geranylgeranyl diphosphate + 7 isopentenyl diphosphate = tri-trans,hepta-cis-undecaprenyl diphosphate + 7 diphosphate. Functionally, catalyzes the sequential condensation of isopentenyl diphosphate (IPP) with geranylgeranyl diphosphate (GGPP) to yield (2Z,6Z,10Z,14Z,18Z,22Z,26Z,30E,34E,38E)-undecaprenyl diphosphate (tritrans,heptacis-UPP). It is probably the precursor of glycosyl carrier lipids. In Thermoplasma acidophilum (strain ATCC 25905 / DSM 1728 / JCM 9062 / NBRC 15155 / AMRC-C165), this protein is Tritrans,polycis-undecaprenyl-diphosphate synthase (geranylgeranyl-diphosphate specific).